The following is a 279-amino-acid chain: MRTTIRDIQQMRDRGERIPMVTAYDYTSAQIADRAGIPMILVGDSLGMVVLGHDSTVPVTLDEMIHHTRAVVRGARNALIIGDLPFLTYASPEQAVISAGRMLQEAGAQAVKLEGGVHIAPTIARLVHLGIPVMGHIGFTPQAVNQIGLRVQGRRANEARQLLEDALAVQEAGAFAIVLELVPAELAQAITERLRIPTIGIGAGAGCSGQVQVWHDLLGLYSDFVPRHARRYTDLATVIGEALTQYVHDVRTGTFPGPEHSSRMDPTELAAALGNLEES.

Residues Asp-44 and Asp-83 each coordinate Mg(2+). 3-methyl-2-oxobutanoate is bound by residues 44–45 (DS), Asp-83, and Lys-112. Position 114 (Glu-114) interacts with Mg(2+). The Proton acceptor role is filled by Glu-180.

The protein belongs to the PanB family. In terms of assembly, homodecamer; pentamer of dimers. The cofactor is Mg(2+).

Its subcellular location is the cytoplasm. The enzyme catalyses 3-methyl-2-oxobutanoate + (6R)-5,10-methylene-5,6,7,8-tetrahydrofolate + H2O = 2-dehydropantoate + (6S)-5,6,7,8-tetrahydrofolate. It functions in the pathway cofactor biosynthesis; (R)-pantothenate biosynthesis; (R)-pantoate from 3-methyl-2-oxobutanoate: step 1/2. Catalyzes the reversible reaction in which hydroxymethyl group from 5,10-methylenetetrahydrofolate is transferred onto alpha-ketoisovalerate to form ketopantoate. The polypeptide is 3-methyl-2-oxobutanoate hydroxymethyltransferase (Chloroflexus aggregans (strain MD-66 / DSM 9485)).